A 152-amino-acid chain; its full sequence is Pseudo histidine-containing phosphotransfer protein 5 (152 aa).

Positions N38–A140 constitute an HPt domain.

Its function is as follows. Functions as a two-component phosphorelay mediator between cytokinin sensor histidine kinases and response regulators (B-type ARRs). Plays an important role in propagating cytokinin signal transduction. The polypeptide is Pseudo histidine-containing phosphotransfer protein 5 (Oryza sativa subsp. japonica (Rice)).